The sequence spans 578 residues: Trehalase (578 aa).

An N-terminal signal peptide occupies residues 1 to 19; sequence MPGSTWELHLLLLLGLGLG. An N-linked (GlcNAc...) asparagine glycan is attached at N78. Residues R168, 175–176, N212, and 221–223 contribute to the substrate site; these read WD and RSQ. N261 carries N-linked (GlcNAc...) asparagine glycosylation. Substrate is bound by residues 286–288 and G319; that span reads RPE. D321 functions as the Proton donor/acceptor in the catalytic mechanism. N369 carries N-linked (GlcNAc...) asparagine glycosylation. The active-site Proton donor/acceptor is the E514. Substrate is bound at residue E528. S555 is lipidated: GPI-anchor amidated serine. A propeptide spans 556 to 578 (removed in mature form); sequence GTQLALLEPHCLAAALLLSFLTR.

This sequence belongs to the glycosyl hydrolase 37 family. Homodimer; disulfide-linked. Expressed in small intestine, kidney, and to a lesser extent in liver.

Its subcellular location is the cell membrane. It catalyses the reaction alpha,alpha-trehalose + H2O = alpha-D-glucose + beta-D-glucose. Its function is as follows. Intestinal trehalase is probably involved in the hydrolysis of ingested trehalose. This Oryctolagus cuniculus (Rabbit) protein is Trehalase (TREH).